A 34-amino-acid chain; its full sequence is Dermaseptin-H5 (34 aa).

In terms of tissue distribution, expressed by the skin glands.

The protein resides in the secreted. Has antimicrobial activity. This chain is Dermaseptin-H5, found in Pithecopus hypochondrialis (Orange-legged leaf frog).